We begin with the raw amino-acid sequence, 1023 residues long: Sodium/potassium-transporting ATPase subunit alpha-1 (1023 aa).

A propeptide spanning residues 1-5 (MGLGK) is cleaved from the precursor. Positions 1 to 11 (MGLGKGKDEYK) are enriched in basic and acidic residues. Residues 1 to 33 (MGLGKGKDEYKLAATSEDGGKKDKKAKAKKDMD) are disordered. Over 6 to 87 (GKDEYKLAAT…NALTPPPTTP (82 aa)) the chain is Cytoplasmic. A Phosphoserine; by PKC modification is found at Ser-16. The segment at 82–84 (PPP) is interaction with phosphoinositide-3 kinase. A helical transmembrane segment spans residues 88 to 108 (EWVKFCKQLFGGFSMLLWIGA). Topologically, residues 109–131 (ILCFLAYGIQAASEDEPANDNLY) are extracellular. Residues 132-152 (LGIVLSAVVIITGCFSYYQEA) traverse the membrane as a helical segment. Residues 153 to 288 (KSSKIMESFK…GGKTPIAIEI (136 aa)) lie on the Cytoplasmic side of the membrane. Residues 216-237 (SSLTGESEPQTRSPDFSNENPL) form a disordered region. Residues 289–308 (EHFIHIITGVAVFLGVSFFI) traverse the membrane as a helical segment. Over 309–320 (LSLILGYNWLEA) the chain is Extracellular. The chain crosses the membrane as a helical span at residues 321–338 (VIFLIGIIVANVPEGLLA). Residues 339–772 (TVTVCLTLTA…EEGRLIFDNL (434 aa)) lie on the Cytoplasmic side of the membrane. The active-site 4-aspartylphosphate intermediate is Asp-376. Position 487 (Lys-487) interacts with ATP. Positions 717 and 721 each coordinate Mg(2+). The chain crosses the membrane as a helical span at residues 773 to 792 (KKSIAYTLTSNIPEISPFLL). Topologically, residues 793–802 (FIIANIPLPL) are extracellular. Residues 803 to 823 (GTVTILCIDLGTDMVPAISLA) traverse the membrane as a helical segment. Residues 824–843 (YEKAESDIMKRQPRNPKTDK) lie on the Cytoplasmic side of the membrane. The helical transmembrane segment at 844 to 866 (LVNERLISIAYGQIGMMQATAGF) threads the bilayer. Topologically, residues 867–918 (FTYFVILAENGFLPMDLIGVRVLWDDKYVNDLEDSYGQQWTYERRKIVEYSC) are extracellular. Residues 919–938 (HTAFFASIVIVQWADLIICK) form a helical membrane-spanning segment. The Cytoplasmic segment spans residues 939–951 (TRRNSIVQQGMTN). Ser-943 bears the Phosphoserine; by PKA mark. The chain crosses the membrane as a helical span at residues 952 to 970 (RILIFGLFEETALAAFLSY). Topologically, residues 971–985 (CPGMDVALRMYPMKP) are extracellular. A helical membrane pass occupies residues 986–1006 (LWWFCAFPYSLLIFLYDEARR). At 1007 to 1023 (YILRRNPGGWVEKETYY) the chain is on the cytoplasmic side.

This sequence belongs to the cation transport ATPase (P-type) (TC 3.A.3) family. Type IIC subfamily. As to quaternary structure, the sodium/potassium-transporting ATPase is composed of a catalytic alpha subunit, an auxiliary non-catalytic beta subunit and an additional regulatory subunit.

The protein localises to the cell membrane. The protein resides in the sarcolemma. The enzyme catalyses K(+)(out) + Na(+)(in) + ATP + H2O = K(+)(in) + Na(+)(out) + ADP + phosphate + H(+). In terms of biological role, this is the catalytic component of the active enzyme, which catalyzes the hydrolysis of ATP coupled with the exchange of sodium and potassium ions across the plasma membrane. This action creates the electrochemical gradient of sodium and potassium ions, providing the energy for active transport of various nutrients. The polypeptide is Sodium/potassium-transporting ATPase subunit alpha-1 (atp1a1) (Oreochromis mossambicus (Mozambique tilapia)).